The primary structure comprises 440 residues: Transposon Ty1-ER2 Gag polyprotein (440 aa).

3 stretches are compositionally biased toward polar residues: residues 1–10, 48–60, and 127–152; these read MESQQLSNYP, TKAN…TPAS, and QSQF…GNTF. Disordered stretches follow at residues 1–93, 126–173, and 352–440; these read MESQ…MMTQ, PQSQ…RPPP, and GSRN…PETY. Low complexity predominate over residues 153–165; sequence TDSSSADSDMTST. An RNA-binding region spans residues 299-401; the sequence is NNGIHINNKV…NSKSKTARAH (103 aa). A compositionally biased stretch (low complexity) spans 402 to 418; it reads NVSTSNNSPSTDNDSIS. At S416 the chain carries Phosphoserine. A compositionally biased stretch (polar residues) spans 419–428; it reads KSTTEPIQLN. The span at 429-440 shows a compositional bias: basic and acidic residues; that stretch reads NKHDLHLRPETY.

As to quaternary structure, homotrimer.

The protein resides in the cytoplasm. In terms of biological role, capsid protein (CA) is the structural component of the virus-like particle (VLP), forming the shell that encapsulates the retrotransposons dimeric RNA genome. The particles are assembled from trimer-clustered units and there are holes in the capsid shells that allow for the diffusion of macromolecules. CA also has nucleocapsid-like chaperone activity, promoting primer tRNA(i)-Met annealing to the multipartite primer-binding site (PBS), dimerization of Ty1 RNA and initiation of reverse transcription. This chain is Transposon Ty1-ER2 Gag polyprotein (TY1A-ER2), found in Saccharomyces cerevisiae (strain ATCC 204508 / S288c) (Baker's yeast).